The primary structure comprises 249 residues: UPF0758 protein Oant_1909 (249 aa).

Residues 127–249 enclose the MPN domain; it reads VLGSWNKVIE…HASFRGLGLI (123 aa). Positions 198, 200, and 211 each coordinate Zn(2+). The JAMM motif motif lies at 198 to 211; it reads HNHPSGDPTPSRAD.

Belongs to the UPF0758 family.

This Brucella anthropi (strain ATCC 49188 / DSM 6882 / CCUG 24695 / JCM 21032 / LMG 3331 / NBRC 15819 / NCTC 12168 / Alc 37) (Ochrobactrum anthropi) protein is UPF0758 protein Oant_1909.